We begin with the raw amino-acid sequence, 521 residues long: Two-component response regulator ARR11 (521 aa).

A Response regulatory domain is found at 12-127; sequence RVLVVDDDPT…ELKIIWQHVL (116 aa). Aspartate 63 is modified (4-aspartylphosphate). Positions 192-195 match the Nuclear localization signal motif; sequence KKAR. The myb-like GARP DNA-binding region spans 195–246; sequence RVVWSFELHHKFVNAVNQIGCDHKAGPKKILDLMNVPWLTRENVASHLQKYR.

This sequence belongs to the ARR family. Type-B subfamily. In terms of assembly, binds the target DNA as a monomer. Post-translationally, two-component system major event consists of a His-to-Asp phosphorelay between a sensor histidine kinase (HK) and a response regulator (RR). In plants, the His-to-Asp phosphorelay involves an additional intermediate named Histidine-containing phosphotransfer protein (HPt). This multistep phosphorelay consists of a His-Asp-His-Asp sequential transfer of a phosphate group between first a His and an Asp of the HK protein, followed by the transfer to a conserved His of the HPt protein and finally the transfer to an Asp in the receiver domain of the RR protein. Detected in the whole plant. Predominantly expressed in roots and stems.

It is found in the nucleus. Functionally, transcriptional activator that binds specifically to the DNA sequence 5'-[AG]GATT-3'. Functions as a response regulator involved in His-to-Asp phosphorelay signal transduction system. Phosphorylation of the Asp residue in the receiver domain activates the ability of the protein to promote the transcription of target genes. Could directly activate some type-A response regulators in response to cytokinins. The chain is Two-component response regulator ARR11 (ARR11) from Arabidopsis thaliana (Mouse-ear cress).